A 105-amino-acid polypeptide reads, in one-letter code: Cyclotide vibi-E (105 aa).

A signal peptide spans 1–9; it reads AAFALPALA. A propeptide spanning residues 10 to 69 is cleaved from the precursor; that stretch reads SSFEKDVISFRAIQAVLEKRGLSKLEDDPVLSALAHTKTIISNPVIEEALLNGANLKAGN. The segment at residues 70–99 is a cross-link (cyclopeptide (Gly-Asn)); that stretch reads GIPCAESCVWIPCTVTALIGCGCSNKVCYN. 3 disulfides stabilise this stretch: Cys73/Cys90, Cys77/Cys92, and Cys82/Cys97. The propeptide occupies 100–105; the sequence is SLQTKY.

Post-translationally, this is a cyclic peptide.

In terms of biological role, probably participates in a plant defense mechanism. Has cytotoxic activity, active against a human lymphoma cell line with an IC(50) of 3.2 uM. The sequence is that of Cyclotide vibi-E from Viola biflora (Yellow wood violet).